We begin with the raw amino-acid sequence, 548 residues long: MAAKDVKFGNDARVKMLRGVNVLADAVKVTLGPKGRNVVLDKSFGAPTITKDGVSVAREIELEDKFENMGAQMVKEVASKANDAAGDGTTTATVLAQAIVNEGLKAVAAGMNPMDLKRGIDKAVLAAVEELKALSVPCSDSKAIAQVGTISANSDETVGKLIAEAMDKVGKEGVITVEDGTGLEDELDVVEGMQFDRGYLSPYFINKPDTGAVELESPFILLADKKISNIREMLPVLEAVAKAGKPLVIIAEDVEGEALATLVVNTMRGIVKVAAVKAPGFGDRRKAMLQDIATLTGGTVISEEIGMELEKATLEDLGQAKRVVINKDTTTIIDGVGEESAIQGRVAQIRKQIEEATSDYDREKLQERVAKLAGGVAVIKVGAATEVEMKEKKARVDDALHATRAAVEEGVVAGGGVALVRVAAKLAGLTGQNEDQNVGIKVALRAMEAPLRQIVSNAGEEPSVVANNVKAGDGNYGYNAATEEYGNMIDFGILDPTKVTRSALQYAASVAGLMITTECMVTDLPKGDAPDLGAAGGMGGMGGMGGMM.

ATP is bound by residues 30-33 (TLGP), Lys51, 87-91 (DGTTT), Gly415, 479-481 (NAA), and Asp495.

It belongs to the chaperonin (HSP60) family. As to quaternary structure, forms a cylinder of 14 subunits composed of two heptameric rings stacked back-to-back. Interacts with the co-chaperonin GroES.

The protein localises to the cytoplasm. It catalyses the reaction ATP + H2O + a folded polypeptide = ADP + phosphate + an unfolded polypeptide.. Its function is as follows. Together with its co-chaperonin GroES, plays an essential role in assisting protein folding. The GroEL-GroES system forms a nano-cage that allows encapsulation of the non-native substrate proteins and provides a physical environment optimized to promote and accelerate protein folding. The chain is Chaperonin GroEL from Klebsiella pneumoniae subsp. pneumoniae (strain ATCC 700721 / MGH 78578).